The sequence spans 142 residues: Phosphoribosyl-AMP cyclohydrolase (142 aa).

Mg(2+) is bound at residue Asp-85. Position 86 (Cys-86) interacts with Zn(2+). Residues Asp-87 and Asp-89 each coordinate Mg(2+). Cys-102 and Cys-109 together coordinate Zn(2+). Positions 120–142 (GEPPTPVGAGERQPASGTADAAP) are disordered.

Belongs to the PRA-CH family. Homodimer. The cofactor is Mg(2+). Zn(2+) is required as a cofactor.

The protein localises to the cytoplasm. It carries out the reaction 1-(5-phospho-beta-D-ribosyl)-5'-AMP + H2O = 1-(5-phospho-beta-D-ribosyl)-5-[(5-phospho-beta-D-ribosylamino)methylideneamino]imidazole-4-carboxamide. The protein operates within amino-acid biosynthesis; L-histidine biosynthesis; L-histidine from 5-phospho-alpha-D-ribose 1-diphosphate: step 3/9. In terms of biological role, catalyzes the hydrolysis of the adenine ring of phosphoribosyl-AMP. In Acidothermus cellulolyticus (strain ATCC 43068 / DSM 8971 / 11B), this protein is Phosphoribosyl-AMP cyclohydrolase.